We begin with the raw amino-acid sequence, 89 residues long: Albumin-1 (89 aa).

Residue alanine 1 is a signal peptide. Intrachain disulfides connect cysteine 4-cysteine 21, cysteine 8-cysteine 23, and cysteine 16-cysteine 33. A propeptide spanning residues 39-46 is cleaved from the precursor; the sequence is LSSVAKMI.

In terms of processing, the C-terminal glycine may be removed from A1b.

A1b binds to basic 7S globulin (BG) and stimulates its phosphorylation activity. The sequence is that of Albumin-1 (LEG) from Vigna radiata var. radiata (Mung bean).